Reading from the N-terminus, the 903-residue chain is DNA mismatch repair protein MutS (903 aa).

The interval Met1 to Gln89 is disordered. 2 stretches are compositionally biased toward low complexity: residues Ala20–Glu36 and Ala49–Ala62. An ATP-binding site is contributed by Gly719 to Ser726.

It belongs to the DNA mismatch repair MutS family.

Its function is as follows. This protein is involved in the repair of mismatches in DNA. It is possible that it carries out the mismatch recognition step. This protein has a weak ATPase activity. This is DNA mismatch repair protein MutS from Synechococcus sp. (strain CC9605).